The primary structure comprises 532 residues: Berberine bridge enzyme-like 18 (532 aa).

A signal peptide spans 1–29 (MKFQSFFSSVLIFFTTSTLLLSIPHPVSA). Asn-30, Asn-33, Asn-46, Asn-59, Asn-147, Asn-169, and Asn-262 each carry an N-linked (GlcNAc...) asparagine glycan. Cys-40 and Cys-102 form a disulfide bridge. The FAD-binding PCMH-type domain occupies 80 to 254 (DVPKPVLILT…LSWKIGLINV (175 aa)). The segment at residues 117–179 (HDYEGLSYVT…RTLAFPAGVC (63 aa)) is a cross-link (6-(S-cysteinyl)-8alpha-(pros-histidyl)-FAD (His-Cys)).

Belongs to the oxygen-dependent FAD-linked oxidoreductase family. FAD is required as a cofactor. In terms of processing, the FAD cofactor is bound via a bicovalent 6-S-cysteinyl, 8alpha-N1-histidyl FAD linkage.

It is found in the secreted. It localises to the cell wall. In Arabidopsis thaliana (Mouse-ear cress), this protein is Berberine bridge enzyme-like 18.